We begin with the raw amino-acid sequence, 307 residues long: Ribosomal RNA small subunit methyltransferase H (307 aa).

S-adenosyl-L-methionine contacts are provided by residues 34-36, Asp54, Phe79, Asp101, and Gln108; that span reads GGH.

Belongs to the methyltransferase superfamily. RsmH family.

It localises to the cytoplasm. The catalysed reaction is cytidine(1402) in 16S rRNA + S-adenosyl-L-methionine = N(4)-methylcytidine(1402) in 16S rRNA + S-adenosyl-L-homocysteine + H(+). Its function is as follows. Specifically methylates the N4 position of cytidine in position 1402 (C1402) of 16S rRNA. The sequence is that of Ribosomal RNA small subunit methyltransferase H from Vesicomyosocius okutanii subsp. Calyptogena okutanii (strain HA).